A 660-amino-acid chain; its full sequence is Solute carrier family 5 member 4 (660 aa).

Over 1–28 (MASTLSPSTVTKTPGPPEISERIQNAAD) the chain is Cytoplasmic. Residues 29 to 47 (ISVIVIYFVVVMAVGLWAM) traverse the membrane as a helical segment. The Extracellular portion of the chain corresponds to 48–64 (LRTNRGTVGGFFLAGRD). The chain crosses the membrane as a helical span at residues 65-85 (VTWWPMGASLFASNIGSGHFV). Topologically, residues 86-105 (GLAGTGAASGIAIAAFEWNA) are cytoplasmic. Residues 106 to 126 (LLLLLVLGWFFVPIYIKAGVM) form a helical membrane-spanning segment. The Extracellular segment spans residues 127 to 171 (TMPEYLRKRFGGKRLQIYLSILSLFICVALRISSDIFSGAIFIKL). The helical transmembrane segment at 172–191 (ALGLDLYLAIFSLLAITAIY) threads the bilayer. Residues 192 to 208 (TITGGLASVIYTDTLQT) lie on the Cytoplasmic side of the membrane. Residues 209–229 (IIMLIGSFILMGFAFVEVGGY) traverse the membrane as a helical segment. Over 230 to 270 (ESFTEKYMNAIPTIVEGDNLTISPKCYTPQGDSFHIFRDAV) the chain is Extracellular. A glycan (N-linked (GlcNAc...) asparagine) is linked at N248. The chain crosses the membrane as a helical span at residues 271-291 (TGDIPWPGMIFGMTVVAAWYW). The Cytoplasmic segment spans residues 292-314 (CTDQVIVQRCLSGKDMSHVKAAC). A helical transmembrane segment spans residues 315 to 334 (IMCGYLKLLPMFLMVMPGMI). Topologically, residues 335–423 (SRILYTEKVA…RKQASEKELL (89 aa)) are extracellular. A helical membrane pass occupies residues 424–443 (IAGRLFIILLIVISIVWVPL). Topologically, residues 444-455 (VQVAQNGQLFHY) are cytoplasmic. The chain crosses the membrane as a helical span at residues 456–476 (IESISSYLGPPIAAVFLLAIF). Residues 477 to 526 (CKRVNEQGAFWGLIIGFVMGLIRMIAEFVYGTGSCLAASNCPQIICGVHY) lie on the Extracellular side of the membrane. Residues 527 to 547 (LYFALILFFVSILVVLAISLL) form a helical membrane-spanning segment. Topologically, residues 548–638 (TKPIPDVHLY…TDTSEKPLWK (91 aa)) are cytoplasmic. Residues 639 to 659 (TIVNINAILLLAVAVFVHGYF) traverse the membrane as a helical segment.

Belongs to the sodium:solute symporter (SSF) (TC 2.A.21) family. As to expression, kidney, intestine, liver, skeletal muscle and spleen.

Its subcellular location is the cell membrane. It catalyses the reaction D-glucose(out) + 2 Na(+)(out) = D-glucose(in) + 2 Na(+)(in). With respect to regulation, inhibited by phlorizin. Its function is as follows. Low-affinity sodium/D-glucose symporter with a great selectivity for sugars (D-glucose &gt;&gt; D-galactose). Na(+) and D-glucose transport are tightly coupled at neutral pH, but at acidic pH, ion transport is uncoupled from sugar transport. This Sus scrofa (Pig) protein is Solute carrier family 5 member 4.